We begin with the raw amino-acid sequence, 94 residues long: C-X-C motif chemokine 11 (94 aa).

An N-terminal signal peptide occupies residues 1–21 (MSVKGMAIALAVILCATVVQG). The residue at position 27 (arginine 27) is a Citrulline; by PAD2. Intrachain disulfides connect cysteine 30-cysteine 57 and cysteine 32-cysteine 74.

Interacts with TNFAIP6 (via Link domain). High levels in peripheral blood leukocytes, pancreas and liver astrocytes. Moderate levels in thymus, spleen and lung. Low levels in placenta, prostate and small intestine. Also found in epidermal basal layer keratinocytes in skin disorders.

It localises to the secreted. Chemotactic for interleukin-activated T-cells but not unstimulated T-cells, neutrophils or monocytes. Induces calcium release in activated T-cells. Binds to CXCR3. May play an important role in CNS diseases which involve T-cell recruitment. May play a role in skin immune responses. The protein is C-X-C motif chemokine 11 (CXCL11) of Homo sapiens (Human).